A 326-amino-acid chain; its full sequence is Beta-ketoacyl-[acyl-carrier-protein] synthase III (326 aa).

Catalysis depends on residues cysteine 120 and histidine 253. Positions 254–258 (QANIR) are ACP-binding. Asparagine 283 is an active-site residue.

The protein belongs to the thiolase-like superfamily. FabH family. Homodimer.

It is found in the cytoplasm. The enzyme catalyses malonyl-[ACP] + acetyl-CoA + H(+) = 3-oxobutanoyl-[ACP] + CO2 + CoA. The protein operates within lipid metabolism; fatty acid biosynthesis. Its function is as follows. Catalyzes the condensation reaction of fatty acid synthesis by the addition to an acyl acceptor of two carbons from malonyl-ACP. Catalyzes the first condensation reaction which initiates fatty acid synthesis and may therefore play a role in governing the total rate of fatty acid production. Possesses both acetoacetyl-ACP synthase and acetyl transacylase activities. Its substrate specificity determines the biosynthesis of branched-chain and/or straight-chain of fatty acids. This Ralstonia pickettii (strain 12J) protein is Beta-ketoacyl-[acyl-carrier-protein] synthase III.